The chain runs to 61 residues: Large ribosomal subunit protein uL30 (61 aa).

It belongs to the universal ribosomal protein uL30 family. Part of the 50S ribosomal subunit.

This is Large ribosomal subunit protein uL30 from Petrotoga mobilis (strain DSM 10674 / SJ95).